Here is a 447-residue protein sequence, read N- to C-terminus: Ribulose bisphosphate carboxylase large chain (447 aa).

An N6,N6,N6-trimethyllysine modification is found at lysine 5. Substrate contacts are provided by asparagine 114 and threonine 164. Lysine 166 functions as the Proton acceptor in the catalytic mechanism. Lysine 168 contributes to the substrate binding site. Mg(2+)-binding residues include lysine 192, aspartate 194, and glutamate 195. Lysine 192 carries the N6-carboxylysine modification. Histidine 285 serves as the catalytic Proton acceptor. The substrate site is built by arginine 286, histidine 318, and serine 370.

The protein belongs to the RuBisCO large chain family. Type I subfamily. As to quaternary structure, heterohexadecamer of 8 large chains and 8 small chains; disulfide-linked. The disulfide link is formed within the large subunit homodimers. Mg(2+) is required as a cofactor. Post-translationally, the disulfide bond which can form in the large chain dimeric partners within the hexadecamer appears to be associated with oxidative stress and protein turnover.

It localises to the plastid. The protein resides in the chloroplast. The catalysed reaction is 2 (2R)-3-phosphoglycerate + 2 H(+) = D-ribulose 1,5-bisphosphate + CO2 + H2O. The enzyme catalyses D-ribulose 1,5-bisphosphate + O2 = 2-phosphoglycolate + (2R)-3-phosphoglycerate + 2 H(+). Its function is as follows. RuBisCO catalyzes two reactions: the carboxylation of D-ribulose 1,5-bisphosphate, the primary event in carbon dioxide fixation, as well as the oxidative fragmentation of the pentose substrate in the photorespiration process. Both reactions occur simultaneously and in competition at the same active site. In Camassia leichtlinii (Western quamash), this protein is Ribulose bisphosphate carboxylase large chain.